Here is a 783-residue protein sequence, read N- to C-terminus: Metabotropic glutamate receptor-like protein J (783 aa).

A signal peptide spans 1–20 (MKILLYIAIILSFFSLITIS). Over 21 to 383 (SECKIAVLLS…DYPNSLKYGV (363 aa)) the chain is Extracellular. A coiled-coil region spans residues 56–85 (DFSIYYENLEESMEEAEKAFQDALHKGANL). 5 N-linked (GlcNAc...) asparagine glycosylation sites follow: Asn181, Asn196, Asn256, Asn282, and Asn315. Residues 384 to 404 (TIVSGVCIFICLVCMTLVVVF) form a helical membrane-spanning segment. At 405–415 (KKARVIKSSSP) the chain is on the cytoplasmic side. The helical transmembrane segment at 416–436 (AFLLLILLGCCIIFAACILFA) threads the bilayer. Residues 437–443 (QSPTNQT) are Extracellular-facing. The N-linked (GlcNAc...) asparagine glycan is linked to Asn441. Residues 444–464 (CSARIWLLSLGYTLFLGNLLV) traverse the membrane as a helical segment. Over 465–489 (KNWRIWLLFDNPKLKKRAITNWKLY) the chain is Cytoplasmic. Residues 490–510 (PWVFAILAIDVMILAIWQGLG) form a helical membrane-spanning segment. Topologically, residues 511–538 (NINAESRIGYDSLTQYQYKNVCSSDDQG) are extracellular. The helical transmembrane segment at 539 to 559 (SIALYLLLVFHGLVLLVACFI) threads the bilayer. Residues 560–575 (SFKIKVVDIEEFNESK) are Cytoplasmic-facing. The chain crosses the membrane as a helical span at residues 576-596 (PITTSVYIITFCLFIVIPLMV). The Extracellular portion of the chain corresponds to 597-604 (SPQSLTSQ). Residues 605 to 625 (TTIICVCAIVTTLISMLLLFG) traverse the membrane as a helical segment. Topologically, residues 626–783 (SKFYKMATQG…GETEIDSNNV (158 aa)) are cytoplasmic. The span at 647–656 (KSSSKSSKSS) shows a compositional bias: low complexity. Disordered regions lie at residues 647–696 (KSSS…FSNK) and 731–783 (QLQQ…SNNV). The segment covering 670–679 (GEDDTSDETS) has biased composition (acidic residues). The span at 763 to 783 (VLSKRISNQQNGETEIDSNNV) shows a compositional bias: polar residues.

It in the N-terminal section; belongs to the BMP lipoprotein family. In the C-terminal section; belongs to the G-protein coupled receptor 3 family. GABA-B receptor subfamily.

Its subcellular location is the cell membrane. The protein localises to the membrane. It localises to the endoplasmic reticulum membrane. It is found in the golgi apparatus membrane. The protein resides in the nucleus envelope. May act during the development and be a negative regulator. The polypeptide is Metabotropic glutamate receptor-like protein J (grlJ) (Dictyostelium discoideum (Social amoeba)).